Here is a 515-residue protein sequence, read N- to C-terminus: MATTLNPSEISELIKTRIEQVKLSAESRNEGTVTSVSDGIVRIFGLADAMQGEMIELPNKTYALALNLERDSVGAVVLGDYEHLREGDIAKTTGRILEVPVGKSLLGRVVNALGEPIDGKGALGPTQTAPVERVAPGVIWRKSVNQPVQTGYKSVDAMIPIGRGQRELIIGDRQTGKTAMAIDTVISQKDTGIKCVYVAIGQKASTIANIVRKLEENDALDHTIVVAATASESAALQYISAYAGCTMGEYFMDRGEDALIIYDDLSKQAVAYRQISLLLKRPPGREAYPGDVFYLHSRLLERAARVSEEYVEKFTQGEVKGKTGSLTALPIIETQAGDVSAFVPTNVISITDGQIFLETDLFNAGIRPAVNAGISVSRVGGSAQTKIIKKLSGGIRISLAQYRELAAFAQFASDLDETTRKQLERGQRVTELMKQKQYTSMSVANQALSIYAVNEGYLDDVPVDKVLTFEESLHAHFSNTQSALIDKINTSGDWDNNIEAAFKKHIEEFKTTGSW.

171 to 178 contacts ATP; the sequence is GDRQTGKT.

The protein belongs to the ATPase alpha/beta chains family. In terms of assembly, F-type ATPases have 2 components, CF(1) - the catalytic core - and CF(0) - the membrane proton channel. CF(1) has five subunits: alpha(3), beta(3), gamma(1), delta(1), epsilon(1). CF(0) has three main subunits: a(1), b(2) and c(9-12). The alpha and beta chains form an alternating ring which encloses part of the gamma chain. CF(1) is attached to CF(0) by a central stalk formed by the gamma and epsilon chains, while a peripheral stalk is formed by the delta and b chains.

Its subcellular location is the cell inner membrane. It catalyses the reaction ATP + H2O + 4 H(+)(in) = ADP + phosphate + 5 H(+)(out). Its function is as follows. Produces ATP from ADP in the presence of a proton gradient across the membrane. The alpha chain is a regulatory subunit. The polypeptide is ATP synthase subunit alpha (Xylella fastidiosa (strain 9a5c)).